Consider the following 99-residue polypeptide: Bacterial microcompartment protein homohexamer (99 aa).

A BMC domain is found at 4-88 (ALGMIEVRGF…PHVNVDAALP (85 aa)).

Belongs to the bacterial microcompartments protein family. Homohexamer with a small central pore. When purified protein is examined by atomic force microscopy it dynamically makes uniform patches about 35 Angstroms thick with hexamers in the same orientation. In the BMC the concave side faces outward, with the N- and C-terminii exposed to the cytoplasm.

It is found in the bacterial microcompartment. The only hexameric shell protein in this bacterium, it forms the majority of the bacterial microcompartment (BMC) shell. Expression of 5 proteins in E.coli (BMC-H (Hoch_5815), BMC-P (Hoch_5814), and 3 BMC-T (Hoch_5812, Hoch_5816, Hoch_3341)) forms a 40 nm artificial BMC with a molecular mass of 6.5 MDa. There are 60 BMC-H hexamers per BMC. The shell facets are 20-30 Angstroms thick (a single hexamer layer), with 1 of BMC-T trimers protruding to the exterior. The chain is Bacterial microcompartment protein homohexamer from Haliangium ochraceum (strain DSM 14365 / JCM 11303 / SMP-2).